We begin with the raw amino-acid sequence, 144 residues long: Ribosomal RNA large subunit methyltransferase H (144 aa).

Residues Gly-92 and 111 to 116 each bind S-adenosyl-L-methionine; that span reads LSPMTF.

The protein belongs to the RNA methyltransferase RlmH family. Homodimer.

The protein resides in the cytoplasm. The enzyme catalyses pseudouridine(1915) in 23S rRNA + S-adenosyl-L-methionine = N(3)-methylpseudouridine(1915) in 23S rRNA + S-adenosyl-L-homocysteine + H(+). Its function is as follows. Specifically methylates the pseudouridine at position 1915 (m3Psi1915) in 23S rRNA. In Synechococcus sp. (strain CC9311), this protein is Ribosomal RNA large subunit methyltransferase H.